Here is a 36-residue protein sequence, read N- to C-terminus: Beta/delta/mu-theraphotoxin-Pv1 (36 aa).

3 disulfide bridges follow: C3–C17, C10–C22, and C16–C30. Residue F36 is modified to Phenylalanine amide.

It belongs to the neurotoxin 10 (Hwtx-1) family. As to expression, expressed by the venom gland.

It localises to the secreted. Its function is as follows. Gating-modifier toxin that targets voltage-gated sodium channels. Inhibits the inactivation of Nav1.7/SCN9A. This Poecilotheria vittata (Ghost ornamental tarantula) protein is Beta/delta/mu-theraphotoxin-Pv1.